Here is a 70-residue protein sequence, read N- to C-terminus: UPF0337 protein BT9727_3385 (70 aa).

The protein belongs to the UPF0337 (CsbD) family.

In Bacillus thuringiensis subsp. konkukian (strain 97-27), this protein is UPF0337 protein BT9727_3385.